Here is a 190-residue protein sequence, read N- to C-terminus: Large ribosomal subunit protein bL25 (190 aa).

The protein belongs to the bacterial ribosomal protein bL25 family. CTC subfamily. As to quaternary structure, part of the 50S ribosomal subunit; part of the 5S rRNA/L5/L18/L25 subcomplex. Contacts the 5S rRNA. Binds to the 5S rRNA independently of L5 and L18.

Its function is as follows. This is one of the proteins that binds to the 5S RNA in the ribosome where it forms part of the central protuberance. The protein is Large ribosomal subunit protein bL25 of Neisseria meningitidis serogroup C (strain 053442).